The following is a 416-amino-acid chain: Polyadenylation and cleavage factor homolog 1 (416 aa).

Positions 1–17 (MASNGSFSAQRNANART) are enriched in polar residues. The disordered stretch occupies residues 1-80 (MASNGSFSAQ…NNNNVSRVSS (80 aa)). Positions 70–80 (SNNNNVSRVSS) are enriched in low complexity. Positions 199–220 (KELTDLLSLLNNEKEKKTLEAS) form a coiled coil. The segment at 254–276 (RQCSSCGLRFKCQEEHSKHMDWH) adopts a C2H2-type zinc-finger fold.

As to quaternary structure, forms a complex with cleavage and polyadenylation specificity factor (CPSF) subunits CLPS3, CLPS5, CPSF30, PCFS4, PCFS5, CSTF77 and FIPS3.

It is found in the nucleus. This chain is Polyadenylation and cleavage factor homolog 1, found in Arabidopsis thaliana (Mouse-ear cress).